We begin with the raw amino-acid sequence, 431 residues long: REST corepressor 1 (431 aa).

Residues 1 to 10 (MIEKGAEISG) are compositionally biased toward basic and acidic residues. The disordered stretch occupies residues 1 to 53 (MIEKGAEISGKRRGRNNAANSKSLGTNVNGSNSWEEGSSSSSSDDEPGGGGMR). Positions 17-28 (NAANSKSLGTNV) are enriched in polar residues. The segment covering 29–42 (NGSNSWEEGSSSSS) has biased composition (low complexity). Residues 50-135 (GGMRVGLQYQ…KSLADLLNFT (86 aa)) enclose the ELM2 domain. The SANT 1 domain occupies 136-187 (PFPDEWTVEDRVLFEQAFSFHGKTFHRIQQMLPDKSIASLVKFYYSWKKTRS). A disordered region spans residues 190–262 (SVMDRHARKQ…NRAKRKPPNG (73 aa)). Residues 224–242 (EQPKEAKKEVPKNDTVPHI) are compositionally biased toward basic and acidic residues. Residues 267 to 314 (QEDVEAVSANANAATTVLRQLDMELVSIKRQIQNIKQTNSAFKEKLQG) adopt a coiled-coil conformation. Residues 327-378 (KFNARWTTEEQLLAVQAIRMYGRDFQAISDVIGNKSVVQVKNFFVNYRRRFN) form the SANT 2 domain.

The protein belongs to the CoREST family. As to quaternary structure, component of a BHC histone deacetylase complex that contains KDM1A. In terms of tissue distribution, expressed in territories in which neurogenesis takes place.

The protein resides in the nucleus. In terms of biological role, essential component of the BHC complex, a corepressor complex that represses transcription of neuron-specific genes in non-neuronal cells. The BHC complex is recruited at RE1/NRSE sites by REST and acts by deacetylating and demethylating specific sites on histones, thereby acting as a chromatin modifier. In the BHC complex, it serves as a molecular beacon for the recruitment of molecular machinery that imposes silencing across a chromosomal interval. Plays a central role in demethylation of Lys-4 of histone H3 by promoting demethylase activity of KDM1A on core histones and nucleosomal substrates. This Xenopus laevis (African clawed frog) protein is REST corepressor 1 (rcor1).